Reading from the N-terminus, the 149-residue chain is uncharacterized protein (149 aa).

Transmembrane regions (helical) follow at residues 39–61 (VPLGTLVFLFVVIITLIPLLIIG), 82–104 (VFGYSLIVSDIVGFAIVFFGAIL), and 119–141 (WMMMLGSLIALGTTANLVSSIYL).

The protein to M.pneumoniae MPN_090.

Its subcellular location is the cell membrane. This is an uncharacterized protein from Mycoplasma pneumoniae (strain ATCC 29342 / M129 / Subtype 1) (Mycoplasmoides pneumoniae).